We begin with the raw amino-acid sequence, 469 residues long: Glutamate--tRNA ligase (469 aa).

A 'HIGH' region motif is present at residues 11-21 (PSPTGFIHLGN). Residues 118 to 131 (GEKPRYDGTWRPEP) show a composition bias toward basic and acidic residues. Positions 118–139 (GEKPRYDGTWRPEPGKVLPEPP) are disordered. A 'KMSKS' region motif is present at residues 243–247 (KMSKR). K246 provides a ligand contact to ATP.

Belongs to the class-I aminoacyl-tRNA synthetase family. Glutamate--tRNA ligase type 1 subfamily. As to quaternary structure, monomer.

It localises to the cytoplasm. It carries out the reaction tRNA(Glu) + L-glutamate + ATP = L-glutamyl-tRNA(Glu) + AMP + diphosphate. Catalyzes the attachment of glutamate to tRNA(Glu) in a two-step reaction: glutamate is first activated by ATP to form Glu-AMP and then transferred to the acceptor end of tRNA(Glu). This chain is Glutamate--tRNA ligase, found in Burkholderia mallei (strain NCTC 10247).